The chain runs to 362 residues: Chorismate synthase (362 aa).

Arg47 is an NADP(+) binding site. FMN is bound by residues 124 to 126 (RAS), Gly286, 301 to 305 (KPTAT), and Arg327.

This sequence belongs to the chorismate synthase family. Homotetramer. The cofactor is FMNH2.

It catalyses the reaction 5-O-(1-carboxyvinyl)-3-phosphoshikimate = chorismate + phosphate. The protein operates within metabolic intermediate biosynthesis; chorismate biosynthesis; chorismate from D-erythrose 4-phosphate and phosphoenolpyruvate: step 7/7. In terms of biological role, catalyzes the anti-1,4-elimination of the C-3 phosphate and the C-6 proR hydrogen from 5-enolpyruvylshikimate-3-phosphate (EPSP) to yield chorismate, which is the branch point compound that serves as the starting substrate for the three terminal pathways of aromatic amino acid biosynthesis. This reaction introduces a second double bond into the aromatic ring system. The sequence is that of Chorismate synthase from Prochlorococcus marinus (strain MIT 9303).